Reading from the N-terminus, the 272-residue chain is MTDLSTLFHAAILGVVEGLTEFLPVSSTGHMIIVGHMLGFTGDKAETFEVIIQLGSILAVVVVFWRRLFGLIGIHFGEVPHEGKTNGKLKLSHIILAMLPAVTLGLMFHDVIKSLFNPQSVMYALVIGGVLLITAEILKPKTPKAEGLDDITYRQAFMIGCFQCLALWPGFSRSGATISGGMLMGVNRYTASEFSFILAVPMMMGASGLDLYKSLHFLSASDIPMFAVGFVTAFVVALVAIKTFLALIKRISFIPFAIYRFIVAAAVYWVFM.

The next 7 helical transmembrane spans lie at Phe-22–Gly-42, Ala-45–Trp-65, Ser-92–Ile-112, Pro-118–Leu-138, Tyr-189–Leu-209, Val-228–Ile-248, and Ile-251–Phe-271.

It belongs to the UppP family.

It is found in the cell inner membrane. It carries out the reaction di-trans,octa-cis-undecaprenyl diphosphate + H2O = di-trans,octa-cis-undecaprenyl phosphate + phosphate + H(+). Functionally, catalyzes the dephosphorylation of undecaprenyl diphosphate (UPP). Confers resistance to bacitracin. This is Undecaprenyl-diphosphatase from Photorhabdus laumondii subsp. laumondii (strain DSM 15139 / CIP 105565 / TT01) (Photorhabdus luminescens subsp. laumondii).